Reading from the N-terminus, the 109-residue chain is Thiosulfate sulfurtransferase GlpE (109 aa).

In terms of domain architecture, Rhodanese spans 17–105 (AQGQALLLDI…WQRAYPEEVA (89 aa)). C65 (cysteine persulfide intermediate) is an active-site residue.

This sequence belongs to the GlpE family.

The protein resides in the cytoplasm. The catalysed reaction is thiosulfate + hydrogen cyanide = thiocyanate + sulfite + 2 H(+). The enzyme catalyses thiosulfate + [thioredoxin]-dithiol = [thioredoxin]-disulfide + hydrogen sulfide + sulfite + 2 H(+). In terms of biological role, transferase that catalyzes the transfer of sulfur from thiosulfate to thiophilic acceptors such as cyanide or dithiols. May function in a CysM-independent thiosulfate assimilation pathway by catalyzing the conversion of thiosulfate to sulfite, which can then be used for L-cysteine biosynthesis. The chain is Thiosulfate sulfurtransferase GlpE from Edwardsiella ictaluri (strain 93-146).